We begin with the raw amino-acid sequence, 227 residues long: tRNA (guanine-N(1)-)-methyltransferase (227 aa).

Residues Gly-112 and 132–137 (IGDFIL) each bind S-adenosyl-L-methionine.

It belongs to the RNA methyltransferase TrmD family. Homodimer.

Its subcellular location is the cytoplasm. The catalysed reaction is guanosine(37) in tRNA + S-adenosyl-L-methionine = N(1)-methylguanosine(37) in tRNA + S-adenosyl-L-homocysteine + H(+). In terms of biological role, specifically methylates guanosine-37 in various tRNAs. This chain is tRNA (guanine-N(1)-)-methyltransferase, found in Sulfurovum sp. (strain NBC37-1).